Reading from the N-terminus, the 254-residue chain is CDP-diacylglycerol pyrophosphatase (254 aa).

The helical transmembrane segment at 6-26 (YFLLALLVAILAALAGGYYWL) threads the bilayer.

It belongs to the Cdh family.

It is found in the cell inner membrane. It catalyses the reaction a CDP-1,2-diacyl-sn-glycerol + H2O = a 1,2-diacyl-sn-glycero-3-phosphate + CMP + 2 H(+). The protein operates within phospholipid metabolism; CDP-diacylglycerol degradation; phosphatidate from CDP-diacylglycerol: step 1/1. In Klebsiella pneumoniae (strain 342), this protein is CDP-diacylglycerol pyrophosphatase.